The chain runs to 24 residues: SM-11044-binding protein (24 aa).

Its function is as follows. May mediate relaxation of depolarized colon tonus. It binds iodocyanopindolol and SM-11044. The sequence is that of SM-11044-binding protein from Rattus norvegicus (Rat).